The sequence spans 362 residues: D-alanine--D-alanine ligase (362 aa).

Positions 134 to 345 (KILAQRAGVP…YPDLITRLIR (212 aa)) constitute an ATP-grasp domain. An ATP-binding site is contributed by 170–225 (GQLGTSNLFVKPSNQGSSVGITHVTDDSNYAEALAEAFKYDDKVLVEEGIVGTEVE). Aspartate 298, glutamate 312, and asparagine 314 together coordinate Mg(2+).

It belongs to the D-alanine--D-alanine ligase family. The cofactor is Mg(2+). Mn(2+) serves as cofactor.

It is found in the cytoplasm. It catalyses the reaction 2 D-alanine + ATP = D-alanyl-D-alanine + ADP + phosphate + H(+). It participates in cell wall biogenesis; peptidoglycan biosynthesis. In terms of biological role, cell wall formation. The chain is D-alanine--D-alanine ligase from Lactobacillus delbrueckii subsp. bulgaricus (strain ATCC BAA-365 / Lb-18).